Here is a 401-residue protein sequence, read N- to C-terminus: Type I restriction enzyme EcoprrI specificity subunit (401 aa).

The protein belongs to the type-I restriction system S methylase family. As to quaternary structure, the type I restriction/modification system is composed of three polypeptides R, M and S; the restriction enzyme has stoichiometry R(2)M(2)S(1) while the methyltransferase is M(2)S(1).

Its function is as follows. The specificity (S) subunit of a type I restriction enzyme; this subunit dictates DNA sequence specificity. The M and S subunits together form a methyltransferase (MTase) that methylates two adenine residues of the sequence 5'-CCAN(7)ATGC-3'. In the presence of the R subunit the complex can also act as an endonuclease, binding to the same target sequence but cutting the DNA some distance from this site. Whether the DNA is cut or modified depends on the methylation state of the target sequence. When the target site is unmodified, the DNA is cut. When the target site is hemimethylated, the complex acts as a maintenance MTase modifying the DNA so that both strands become methylated. After locating a non-methylated recognition site, the enzyme complex serves as a molecular motor that translocates DNA in an ATP-dependent manner until a collision occurs that triggers cleavage. This chain is Type I restriction enzyme EcoprrI specificity subunit (prrB), found in Escherichia coli.